The following is a 216-amino-acid chain: Eukaryotic translation initiation factor 3 subunit K (216 aa).

In terms of domain architecture, PCI spans 40–202 (YDLDANLAVL…HIKSKNIAEK (163 aa)).

Belongs to the eIF-3 subunit K family. Component of the eukaryotic translation initiation factor 3 (eIF-3) complex.

The protein localises to the cytoplasm. Component of the eukaryotic translation initiation factor 3 (eIF-3) complex, which is involved in protein synthesis of a specialized repertoire of mRNAs and, together with other initiation factors, stimulates binding of mRNA and methionyl-tRNAi to the 40S ribosome. The eIF-3 complex specifically targets and initiates translation of a subset of mRNAs involved in cell proliferation. This Nematostella vectensis (Starlet sea anemone) protein is Eukaryotic translation initiation factor 3 subunit K.